A 367-amino-acid chain; its full sequence is Queuine tRNA-ribosyltransferase (367 aa).

Aspartate 92 functions as the Proton acceptor in the catalytic mechanism. Residues 92-96, aspartate 146, glutamine 188, and glycine 215 each bind substrate; that span reads DSGGF. The segment at 246-252 is RNA binding; that stretch reads GVGTPKD. Aspartate 265 acts as the Nucleophile in catalysis. Cysteine 303, cysteine 305, cysteine 308, and histidine 334 together coordinate Zn(2+).

It belongs to the queuine tRNA-ribosyltransferase family. As to quaternary structure, homodimer. Within each dimer, one monomer is responsible for RNA recognition and catalysis, while the other monomer binds to the replacement base PreQ1. Requires Zn(2+) as cofactor.

The enzyme catalyses 7-aminomethyl-7-carbaguanine + guanosine(34) in tRNA = 7-aminomethyl-7-carbaguanosine(34) in tRNA + guanine. The protein operates within tRNA modification; tRNA-queuosine biosynthesis. Functionally, catalyzes the base-exchange of a guanine (G) residue with the queuine precursor 7-aminomethyl-7-deazaguanine (PreQ1) at position 34 (anticodon wobble position) in tRNAs with GU(N) anticodons (tRNA-Asp, -Asn, -His and -Tyr). Catalysis occurs through a double-displacement mechanism. The nucleophile active site attacks the C1' of nucleotide 34 to detach the guanine base from the RNA, forming a covalent enzyme-RNA intermediate. The proton acceptor active site deprotonates the incoming PreQ1, allowing a nucleophilic attack on the C1' of the ribose to form the product. After dissociation, two additional enzymatic reactions on the tRNA convert PreQ1 to queuine (Q), resulting in the hypermodified nucleoside queuosine (7-(((4,5-cis-dihydroxy-2-cyclopenten-1-yl)amino)methyl)-7-deazaguanosine). This Francisella tularensis subsp. holarctica (strain FTNF002-00 / FTA) protein is Queuine tRNA-ribosyltransferase.